The sequence spans 367 residues: Undecaprenyl-phosphate alpha-N-acetylglucosaminyl 1-phosphate transferase (367 aa).

A run of 10 helical transmembrane segments spans residues 3 to 23 (LLTV…FLFF), 46 to 66 (LIPL…FGIV), 69 to 89 (YIPH…IGAL), 132 to 152 (VLGP…INAF), 158 to 178 (IDGL…MILW), 187 to 207 (IWCF…LGIL), 213 to 233 (VFMG…ILLE), 242 to 262 (ISPV…VAIM), 294 to 314 (AFVL…LAEY), and 318 to 338 (VPEW…GYCI).

This sequence belongs to the glycosyltransferase 4 family. WecA subfamily. Mg(2+) is required as a cofactor. Mn(2+) serves as cofactor.

The protein localises to the cell inner membrane. It catalyses the reaction di-trans,octa-cis-undecaprenyl phosphate + UDP-N-acetyl-alpha-D-glucosamine = N-acetyl-alpha-D-glucosaminyl-di-trans,octa-cis-undecaprenyl diphosphate + UMP. It participates in bacterial outer membrane biogenesis; LPS O-antigen biosynthesis. Its pathway is bacterial outer membrane biogenesis; enterobacterial common antigen biosynthesis. In terms of biological role, catalyzes the transfer of the GlcNAc-1-phosphate moiety from UDP-GlcNAc onto the carrier lipid undecaprenyl phosphate (C55-P), yielding GlcNAc-pyrophosphoryl-undecaprenyl (GlcNAc-PP-C55). The polypeptide is Undecaprenyl-phosphate alpha-N-acetylglucosaminyl 1-phosphate transferase (Escherichia coli O157:H7).